A 540-amino-acid chain; its full sequence is Chaperonin GroEL 2 (540 aa).

ATP is bound by residues 29–32, 86–90, Gly413, 476–478, and Asp492; these read TLGP, DGTTT, and NAA.

It belongs to the chaperonin (HSP60) family. In terms of assembly, forms a cylinder of 14 subunits composed of two heptameric rings stacked back-to-back. Interacts with the co-chaperonin GroES.

It is found in the cytoplasm. It carries out the reaction ATP + H2O + a folded polypeptide = ADP + phosphate + an unfolded polypeptide.. Its function is as follows. Together with its co-chaperonin GroES, plays an essential role in assisting protein folding. The GroEL-GroES system forms a nano-cage that allows encapsulation of the non-native substrate proteins and provides a physical environment optimized to promote and accelerate protein folding. The polypeptide is Chaperonin GroEL 2 (Streptomyces albus G).